The primary structure comprises 117 residues: Minor capsid protein VP2 (117 aa).

It belongs to the lagovirus VP2 protein family. In terms of assembly, homooligomer. The portal-like structure consists in 12 copies of VP2. Interacts with capsid protein VP1.

The protein resides in the virion. The protein localises to the host cytoplasm. In terms of biological role, minor structural protein that forms a portal-like structure at a unique three-fold axis of symmetry, following binding to the host receptor. The channel formed by VP2 may allow the delivery of the viral genome through the host endosomal membrane. This chain is Minor capsid protein VP2, found in Oryctolagus cuniculus (Rabbit).